A 338-amino-acid chain; its full sequence is Ribosomal RNA small subunit methyltransferase C (338 aa).

The protein belongs to the methyltransferase superfamily. RsmC family. In terms of assembly, monomer.

Its subcellular location is the cytoplasm. The catalysed reaction is guanosine(1207) in 16S rRNA + S-adenosyl-L-methionine = N(2)-methylguanosine(1207) in 16S rRNA + S-adenosyl-L-homocysteine + H(+). Its function is as follows. Specifically methylates the guanine in position 1207 of 16S rRNA in the 30S particle. The polypeptide is Ribosomal RNA small subunit methyltransferase C (Photorhabdus laumondii subsp. laumondii (strain DSM 15139 / CIP 105565 / TT01) (Photorhabdus luminescens subsp. laumondii)).